The chain runs to 142 residues: Transcriptional regulator MraZ (142 aa).

SpoVT-AbrB domains lie at 5–47 and 76–119; these read EYQH…TINE and ACIV…SREK.

Belongs to the MraZ family. Forms oligomers.

The protein resides in the cytoplasm. Its subcellular location is the nucleoid. This is Transcriptional regulator MraZ from Clostridium botulinum (strain Eklund 17B / Type B).